The primary structure comprises 740 residues: Homeobox protein 4 (740 aa).

Positions 1–13 (MNTVEENNTKITD) are enriched in polar residues. Disordered regions lie at residues 1 to 41 (MNTV…ENLS) and 179 to 491 (NNNN…NNEI). Composition is skewed to low complexity over residues 14–34 (NNNN…NNKN), 179–241 (NNNN…PQQN), 251–288 (NNNN…NNNN), and 303–316 (STTD…SVPS). Residues 254–287 (NINNNNINKNNNNYNNNNNNKNNNNNNNNNNNNN) adopt a coiled-coil conformation. The span at 317 to 328 (NKKKSSKTKQKS) shows a compositional bias: basic residues. Polar residues predominate over residues 339-363 (HKSNYHQQPNQNSQHLQSKPNSPIL). Low complexity-rich tracts occupy residues 365-390 (SSPL…SPPQ) and 397-491 (NNNF…NNEI). Residues 472–500 (NTNTNNNNNKNNNNNNNNEIENNNNEELI) are a coiled coil. A DNA-binding region (homeobox) is located at residues 605-667 (RPKKGAKLSK…NTRRRKVPTL (63 aa)). Residues 686–722 (NNNNNNGGNSNFKNNNNNTITTTSTSNNNNNNNNNNH) are compositionally biased toward low complexity. The tract at residues 686–740 (NNNNNNGGNSNFKNNNNNTITTTSTSNNNNNNNNNNHNEMECDDGENEESSEYDD) is disordered. Residues 726-740 (ECDDGENEESSEYDD) are compositionally biased toward acidic residues.

The protein localises to the nucleus. Putative transcription factor. This chain is Homeobox protein 4 (hbx4), found in Dictyostelium discoideum (Social amoeba).